Reading from the N-terminus, the 297-residue chain is Homoserine kinase (297 aa).

82-92 is an ATP binding site; it reads PLTRGLGSSAS.

This sequence belongs to the GHMP kinase family. Homoserine kinase subfamily.

The protein localises to the cytoplasm. The enzyme catalyses L-homoserine + ATP = O-phospho-L-homoserine + ADP + H(+). The protein operates within amino-acid biosynthesis; L-threonine biosynthesis; L-threonine from L-aspartate: step 4/5. Functionally, catalyzes the ATP-dependent phosphorylation of L-homoserine to L-homoserine phosphate. The sequence is that of Homoserine kinase from Bacillus mycoides (strain KBAB4) (Bacillus weihenstephanensis).